A 378-amino-acid polypeptide reads, in one-letter code: GTPase Obg (378 aa).

An Obg domain is found at 1–159 (MKFVDEATIE…RRLRLELKVL (159 aa)). Positions 160–336 (ADVGLLGLPN…LIWALQDYLD (177 aa)) constitute an OBG-type G domain. Residues 166–173 (GLPNAGKS), 191–195 (FTTLH), 213–216 (DIPG), 288–291 (NKLD), and 317–319 (SGL) contribute to the GTP site. Serine 173 and threonine 193 together coordinate Mg(2+). The disordered stretch occupies residues 345-378 (AQDQADGTYVAEDPRFDATRSDAAPPGAPRGGDE).

This sequence belongs to the TRAFAC class OBG-HflX-like GTPase superfamily. OBG GTPase family. As to quaternary structure, monomer. Mg(2+) serves as cofactor.

The protein resides in the cytoplasm. Functionally, an essential GTPase which binds GTP, GDP and possibly (p)ppGpp with moderate affinity, with high nucleotide exchange rates and a fairly low GTP hydrolysis rate. Plays a role in control of the cell cycle, stress response, ribosome biogenesis and in those bacteria that undergo differentiation, in morphogenesis control. This Bordetella petrii (strain ATCC BAA-461 / DSM 12804 / CCUG 43448) protein is GTPase Obg.